A 66-amino-acid chain; its full sequence is Large ribosomal subunit protein uL29 (66 aa).

Belongs to the universal ribosomal protein uL29 family.

The protein is Large ribosomal subunit protein uL29 of Petrotoga mobilis (strain DSM 10674 / SJ95).